Reading from the N-terminus, the 159-residue chain is MSPISPPASGVGLGYGIAIAVSILVLISFIMLASYICIRSKSTGRDEATSDVVLDLPSPAAEVKLGLDRPVIESYPRIVLGDSRRLPRPNNGPCSICLCDYEAREPVRCIPECNHCFHTDCVDEWLRTSATCPLCRNSPAPSRLATPLSDLVPLAFQIR.

Residues 13-33 form a helical membrane-spanning segment; it reads LGYGIAIAVSILVLISFIMLA. An RING-type; atypical zinc finger spans residues 94–136; that stretch reads CSICLCDYEAREPVRCIPECNHCFHTDCVDEWLRTSATCPLCR.

This sequence belongs to the RING-type zinc finger family. ATL subfamily.

It is found in the membrane. The enzyme catalyses S-ubiquitinyl-[E2 ubiquitin-conjugating enzyme]-L-cysteine + [acceptor protein]-L-lysine = [E2 ubiquitin-conjugating enzyme]-L-cysteine + N(6)-ubiquitinyl-[acceptor protein]-L-lysine.. It functions in the pathway protein modification; protein ubiquitination. In Arabidopsis thaliana (Mouse-ear cress), this protein is Putative RING-H2 finger protein ATL69 (ATL69).